Consider the following 426-residue polypeptide: UDP-N-acetylglucosamine 1-carboxyvinyltransferase (426 aa).

23-24 contributes to the phosphoenolpyruvate binding site; sequence KN. Arg-99 serves as a coordination point for UDP-N-acetyl-alpha-D-glucosamine. Residue Asp-123 is the Proton donor of the active site. 2 residues coordinate UDP-N-acetyl-alpha-D-glucosamine: Asp-311 and Ile-333.

Belongs to the EPSP synthase family. MurA subfamily.

It is found in the cytoplasm. It carries out the reaction phosphoenolpyruvate + UDP-N-acetyl-alpha-D-glucosamine = UDP-N-acetyl-3-O-(1-carboxyvinyl)-alpha-D-glucosamine + phosphate. It functions in the pathway cell wall biogenesis; peptidoglycan biosynthesis. Cell wall formation. Adds enolpyruvyl to UDP-N-acetylglucosamine. In Nocardia farcinica (strain IFM 10152), this protein is UDP-N-acetylglucosamine 1-carboxyvinyltransferase.